We begin with the raw amino-acid sequence, 83 residues long: CDC42 small effector protein 2 (83 aa).

S-palmitoyl cysteine attachment occurs at residues cysteine 10 and cysteine 11. Residues 28–41 (IGEPTNFVHTAHVG) enclose the CRIB domain. Residues serine 42 and serine 51 each carry the phosphoserine modification.

This sequence belongs to the CDC42SE/SPEC family. In terms of assembly, interacts with CDC42 (in GTP-bound form). Interacts weakly with RAC1 and not at all with RHOA.

The protein resides in the cytoplasm. It localises to the cytoskeleton. The protein localises to the cell membrane. Its subcellular location is the cell projection. It is found in the phagocytic cup. Probably involved in the organization of the actin cytoskeleton by acting downstream of CDC42, inducing actin filament assembly. Alters CDC42-induced cell shape changes. In activated T-cells, may play a role in CDC42-mediated F-actin accumulation at the immunological synapse. May play a role in early contractile events in phagocytosis in macrophages. This is CDC42 small effector protein 2 (Cdc42se2) from Rattus norvegicus (Rat).